The following is a 220-amino-acid chain: Charged multivesicular body protein 4b (220 aa).

Disordered regions lie at residues 1–22 (MSLFGKMFGSGGKGGKSASPQE) and 180–220 (EIGD…WAAN). Coiled coils occupy residues 21 to 88 (QEAI…STIE) and 123 to 181 (IDKV…LLEI).

Belongs to the SNF7 family. As to quaternary structure, probable core component of the endosomal sorting required for transport complex III (ESCRT-III). ESCRT-III components are thought to multimerize to form a flat lattice on the perimeter membrane of the endosome.

The protein localises to the cytoplasm. Its subcellular location is the cytosol. It localises to the late endosome membrane. It is found in the midbody. Its function is as follows. Probable core component of the endosomal sorting required for transport complex III (ESCRT-III) which is involved in multivesicular bodies (MVBs) formation and sorting of endosomal cargo proteins into MVBs. MVBs contain intraluminal vesicles (ILVs) that are generated by invagination and scission from the limiting membrane of the endosome and mostly are delivered to lysosomes enabling degradation of membrane proteins, such as stimulated growth factor receptors, lysosomal enzymes and lipids. This is Charged multivesicular body protein 4b (chmp4b) from Danio rerio (Zebrafish).